A 377-amino-acid polypeptide reads, in one-letter code: Cilia- and flagella-associated protein 263 (377 aa).

2 coiled-coil regions span residues 95-139 (LTVE…ADIR) and 169-355 (QKVM…LKGY).

It belongs to the CFAP263 family. In terms of assembly, forms a complex with CFAP184; the interaction is required for functional activity in cilia. Interacts with HAP1 and PCM1.

It is found in the cytoplasm. Its subcellular location is the cytoskeleton. The protein resides in the microtubule organizing center. It localises to the centrosome. The protein localises to the centriolar satellite. It is found in the cell projection. Its subcellular location is the cilium. Its function is as follows. Component of centriolar satellites contributing to primary cilium formation. In complex with CFAP263, acts as a regulator of ciliary beating that connects radial spoke 3 (RS3) to the inner dynein arm (IDA) and the nexin-dynein regulatory complex (N-DRC). The complex is positioned parallel to N-DRC and forms a connection between the arch at the base of RS3, the IDA tail and N-DRC. This Mus musculus (Mouse) protein is Cilia- and flagella-associated protein 263 (Cfap263).